Here is a 141-residue protein sequence, read N- to C-terminus: Bombinins BLP-7/H-BO (141 aa).

Positions 1–18 are cleaved as a signal peptide; sequence MNFKYIIAVSFLIASTYA. A propeptide spanning residues 19 to 43 is cleaved from the precursor; it reads RSVKNDEQSLSQRDVLDEESLREIR. Asn70 carries the asparagine amide modification. A propeptide spanning residues 74–123 is cleaved from the precursor; it reads TAEEHEVMKRLEAVMRDLDSLDHPEEASEKETRGFNQEEIANLFTKKEKR. Leu140 is modified (leucine amide).

The protein belongs to the bombinin family. In terms of tissue distribution, expressed by the skin glands.

It is found in the secreted. Antimicrobial peptide with activity against Gram-positive and -negative bacteria and fungi. Shows activity against P.acnes (MIC=5 uM), E.coli (MIC=5-6.3 uM), S.aureus (MIC=5-6.3 uM), M.luteus, S.cerevisiae and C.albicans (MIC=10-12.5 uM). Also reduces the production of interleukin (IL)-8 and granulocyte-macrophage colony stimulating factor (CSF2) in normal human epidermal keratinocytes (NHEKs). Shows anticancer activity against three human hepatoma cell lines. In vivo, using the rat ear edema model, suppress P.acnes-induced skin inflammation, significantly reducing the ear thickness. Shows weak hemolytic activity against human erythrocytes. Its function is as follows. Shows weak antimicrobial activity (tested on E.coli, S.aureus and C.albicans). Shows high hemolytic activity against human erythrocytes (38% erythrocyte lysis at 80.0 uM, and up to 85% at 159.7 uM). The sequence is that of Bombinins BLP-7/H-BO from Bombina orientalis (Oriental fire-bellied toad).